A 1648-amino-acid chain; its full sequence is Kinesin-like protein KIF14 (1648 aa).

The segment at 1–27 (MSLHSTHNRNNSGDILDIPSSQNSSSL) is disordered. Residues 1-356 (MSLHSTHNRN…AGKDPLKVEN (356 aa)) are required for PRC1-binding. Phosphoserine is present on residues S12 and S272. Residue T277 is modified to Phosphothreonine. S346 is modified (phosphoserine). Positions 356-737 (NSQVTVAVRV…AAQRNSRNID (382 aa)) are required for microtubule-binding with high affinity. The 344-residue stretch at 358-701 (QVTVAVRVRP…LRYANQARLI (344 aa)) folds into the Kinesin motor domain. An ATP-binding site is contributed by 447-454 (GQTGSGKS). The stretch at 705–791 (AKVNEDMNAK…QETKELQKAG (87 aa)) forms a coiled coil. The FHA domain maps to 825 to 891 (TTVGKYKPNS…LRHGDRVILG (67 aa)). The segment at 901–1648 (PVEVQKGKRP…ECTPSRIQWV (748 aa)) is required for CIT-binding. Phosphothreonine is present on T915. Residues 922 to 1079 (KDFEFAKNEL…QNRNNRDKTF (158 aa)) are a coiled coil. Phosphoserine is present on residues S937 and S1292. 2 coiled-coil regions span residues 1332 to 1348 (TNIA…VKKL) and 1468 to 1500 (ENIF…VNRA). The disordered stretch occupies residues 1600–1648 (NTKEEHQQSKSSGIDGSKNKGVPKRVYELHGSSPAVSSEECTPSRIQWV). A compositionally biased stretch (polar residues) spans 1633-1648 (PAVSSEECTPSRIQWV).

This sequence belongs to the TRAFAC class myosin-kinesin ATPase superfamily. Kinesin family. Directly interacts with PRC1 within a complex also containing KIF4A, KIF20A and KIF23; targets to the central spindle. Directly interacts with CIT depending on the activation state of the kinase (stronger interaction with the kinase-dead form); targets to the midbody. Interacts with ARRB2; the interaction is detected in the nucleus upon OR1D2 stimulation. Interacts with AKT1; the interaction is detected in the plasma membrane upon INS stimulation and promotes AKT1 phosphorylation. Interacts with SVIL; at midbody during cytokinesis. Interacts with RADIL (via PDZ domain); recruits RADIL to the microtubule network restricting RADIL from interaction with activated RAP1A.

The protein resides in the nucleus. It localises to the cytoplasm. Its subcellular location is the cytoskeleton. The protein localises to the spindle. It is found in the midbody. Its function is as follows. Microtubule motor protein that binds to microtubules with high affinity through each tubulin heterodimer and has an ATPase activity. Plays a role in many processes like cell division, cytokinesis and also in cell proliferation and apoptosis. During cytokinesis, targets to central spindle and midbody through its interaction with PRC1 and CIT respectively. Regulates cell growth through regulation of cell cycle progression and cytokinesis. During cell cycle progression acts through SCF-dependent proteasomal ubiquitin-dependent protein catabolic process which controls CDKN1B degradation, resulting in positive regulation of cyclins, including CCNE1, CCND1 and CCNB1. During late neurogenesis, regulates the cerebellar, cerebral cortex and olfactory bulb development through regulation of apoptosis, cell proliferation and cell division. Also is required for chromosome congression and alignment during mitotic cell cycle process. Regulates cell spreading, focal adhesion dynamics, and cell migration through its interaction with RADIL resulting in regulation of RAP1A-mediated inside-out integrin activation by tethering RADIL on microtubules. The polypeptide is Kinesin-like protein KIF14 (Homo sapiens (Human)).